The following is a 204-amino-acid chain: CASP-like protein 2U2 (204 aa).

Topologically, residues 1-36 (MGVLGGDAHVPIGSQVSPGSVVVTNNESFGHRKLLK) are cytoplasmic. A helical membrane pass occupies residues 37–57 (GVDFLVRIKAFAFCLAVIVLL). Over 58-84 (KNNVQTTVIAPGIVLQAKYNNTKAPVS) the chain is Extracellular. A glycan (N-linked (GlcNAc...) asparagine) is linked at Asn77. The chain crosses the membrane as a helical span at residues 85–105 (LLVLASICCGYAFLQAVVSLL). Topologically, residues 106-117 (SFIRDKRVLNNT) are cytoplasmic. The helical transmembrane segment at 118–138 (VLAWLTFLLDQVLTYLLLGSA) threads the bilayer. Residues 139 to 170 (AATAEAAYIAKRGEDKVQWKAVCGPFKRFCDH) lie on the Extracellular side of the membrane. Residues 171 to 191 (FAATVFLSFIAVIAFAVSAAI) form a helical membrane-spanning segment. Over 192–204 (SAYYLFRKSKGFK) the chain is Cytoplasmic.

Belongs to the Casparian strip membrane proteins (CASP) family. In terms of assembly, homodimer and heterodimers.

The protein localises to the cell membrane. The protein is CASP-like protein 2U2 of Selaginella moellendorffii (Spikemoss).